Consider the following 533-residue polypeptide: Cytochrome P450 9e2 (533 aa).

Heme is bound at residue Cys-475.

It belongs to the cytochrome P450 family. Heme is required as a cofactor.

The protein resides in the endoplasmic reticulum membrane. Its subcellular location is the microsome membrane. The protein is Cytochrome P450 9e2 (CYP9E2) of Blattella germanica (German cockroach).